Here is an 846-residue protein sequence, read N- to C-terminus: Disrupted in schizophrenia 1 homolog (846 aa).

Disordered stretches follow at residues 1–53 (MQGA…IGFL), 127–147 (HSGV…GDSG), 231–257 (EAEP…GEPR), 277–312 (TRSN…QDGG), and 409–436 (LHGA…AQDS). The interaction with MAP1A stretch occupies residues 1 to 288 (MQGAGSRGAW…SNRQPECGMV (288 aa)). Basic and acidic residues-rich tracts occupy residues 133 to 143 (GNDRRQSERLT) and 248 to 257 (GSDRPHGEPR). A compositionally biased stretch (polar residues) spans 277-300 (TRSNRQPECGMVSSSDAGFSSQDA). The tract at residues 289 to 686 (SSSDAGFSSQ…LERVWKADLE (398 aa)) is interaction with TRAF3IP1. Residues 429 to 587 (RRTTAQDSLP…LLEAKMLALS (159 aa)) form a required for localization to punctate cytoplasmic foci region. The interval 435–846 (DSLPGLAVTR…STAGAQEAED (412 aa)) is necessary and sufficient for interaction with PCNT and localization at the centrosome. A coiled-coil region spans residues 440 to 489 (LAVTRRDWLMREKEQLQKEIEALRARVSVLEAKEQRLSQELEDQEMLLRW). An interaction with ATF4 and ATF5 region spans residues 588 to 846 (GSCFSTAKEL…STAGAQEAED (259 aa)). Residues 721-846 (TAALAVPRTP…STAGAQEAED (126 aa)) are interaction with NDEL1 and PAFAH1B1. The interval 721–846 (TAALAVPRTP…STAGAQEAED (126 aa)) is interaction with PAFAH1B1. The interval 795-828 (GHDEALFQSLQGELQMVKETLQTMFLQLQPAKEA) is interaction with NDEL1.

In terms of assembly, interacts with NDEL1. Interacts with CCDC88A (via C-terminus); the interaction is direct. Interacts with GSK3B. Interacts with tubulin alpha, ACTN2, ANKHD1, ATF4, ATF5, CEP63, EIF3S3, MAP1A, NDEL1, PAFAH1B1, RANBP9, SPTBN4, SYNE1 and TRAF3IP1. Interaction with microtubules may be mediated in part by TRAF3IP1. Interacts (via C-terminal) with PCNT. Interacts with CHCHD6. Interacts with CCDC141. Interacts with FBXW7, the substrate-recognition component of a SCF (SKP1-CUL1-F-box protein) E3 ubiquitin-protein ligase complex; the interaction targets DISC1 for proteasomal degradation. Interacts with ZNF365. Interacts with ATF4; inhibiting ATF4 transcription factor activity by disrupting ATF4 dimerization and DNA-binding. Interacts with PDE4B. Post-translationally, ubiquitinated. Ubiquitination with 'Lys-48'-linked polyubiquitin chains leads to its proteasomal degradation. Expressed in brain, heart, kidney, liver and thymus. Within the brain expression is high in the cerebral cortex, hippocampus and olfactory bulb and is also seen at lower levels in the cerebellum (at protein level).

The protein resides in the cytoplasm. The protein localises to the cytoskeleton. It localises to the mitochondrion. Its subcellular location is the microtubule organizing center. It is found in the centrosome. The protein resides in the postsynaptic density. Its function is as follows. Involved in the regulation of multiple aspects of embryonic and adult neurogenesis. Required for neural progenitor proliferation in the ventrical/subventrical zone during embryonic brain development and in the adult dentate gyrus of the hippocampus. Participates in the Wnt-mediated neural progenitor proliferation as a positive regulator by modulating GSK3B activity and CTNNB1 abundance. Plays a role as a modulator of the AKT-mTOR signaling pathway controlling the tempo of the process of newborn neurons integration during adult neurogenesis, including neuron positioning, dendritic development and synapse formation. Inhibits the activation of AKT-mTOR signaling upon interaction with CCDC88A. Regulates the migration of early-born granule cell precursors toward the dentate gyrus during the hippocampal development. Inhibits ATF4 transcription factor activity in neurons by disrupting ATF4 dimerization and DNA-binding. Plays a role, together with PCNT, in the microtubule network formation. The chain is Disrupted in schizophrenia 1 homolog from Rattus norvegicus (Rat).